We begin with the raw amino-acid sequence, 105 residues long: uncharacterized protein (105 aa).

This is an uncharacterized protein from Mycobacterium bovis (strain ATCC BAA-935 / AF2122/97).